A 37-amino-acid chain; its full sequence is MKVRSSVKKMCDNCKVIRRHGRVLVICSNVKHKQRQG.

Belongs to the bacterial ribosomal protein bL36 family.

This Deinococcus deserti (strain DSM 17065 / CIP 109153 / LMG 22923 / VCD115) protein is Large ribosomal subunit protein bL36.